A 55-amino-acid polypeptide reads, in one-letter code: Large ribosomal subunit protein bL33 (55 aa).

It belongs to the bacterial ribosomal protein bL33 family.

This Edwardsiella ictaluri (strain 93-146) protein is Large ribosomal subunit protein bL33.